Reading from the N-terminus, the 606-residue chain is Ubiquitin carboxyl-terminal hydrolase 2 (606 aa).

The interval 1–201 (MSQLSSTLKR…RSEYLADYLE (201 aa)) is necessary for interaction with MDM4. 2 disordered regions span residues 53-112 (PSPP…GGSG) and 207-228 (ASAPQVPTPTPPSRAPEVLSPT). The span at 90–100 (KRAESQTRGTE) shows a compositional bias: basic and acidic residues. In terms of domain architecture, USP spans 268 to 600 (AGLRNLGNTC…DAYLLFYELA (333 aa)). C277 (nucleophile) is an active-site residue. Residues 404–504 (YLEREDSRIG…FPKILVLHLK (101 aa)) are necessary for interaction with MDM4. Zn(2+)-binding residues include C426, C429, C477, and C480. The Proton acceptor role is filled by H558.

Belongs to the peptidase C19 family. USP2 subfamily. As to quaternary structure, homooligomer. Found in trimeric complex with MDM2 and MDM4 and USP2. Interacts with CCND1; the interaction is direct and promotes its stabilization by antagonizing ubiquitin-dependent degradation. Interacts (via N-terminus and C-terminus) with MDM2. Interacts with MDM4 and PER1. Interacts with KCNQ1; counteracts the NEDD4L-specific down-regulation of I(Ks) and restores plasma membrane localization of KCNQ1.

It is found in the cytoplasm. The protein localises to the perinuclear region. The enzyme catalyses Thiol-dependent hydrolysis of ester, thioester, amide, peptide and isopeptide bonds formed by the C-terminal Gly of ubiquitin (a 76-residue protein attached to proteins as an intracellular targeting signal).. With respect to regulation, cleavage is inhibited by ubiquitin in a dosage-dependent manner. Cleavage is blocked by ubiquitin aldehyde. Functionally, hydrolase that deubiquitinates polyubiquitinated target proteins such as MDM2, MDM4 and CCND1. Possesses both ubiquitin-specific peptidase and isopeptidase activities. Deubiquitinates MDM2 without reversing MDM2-mediated p53/TP53 ubiquitination and thus indirectly promotes p53/TP53 degradation and limits p53 activity. Has no deubiquitinase activity against p53/TP53. Prevents MDM2-mediated degradation of MDM4. Plays a role in the G1/S cell-cycle progression in normal and cancer cells. Plays a role in the regulation of myogenic differentiation of embryonic muscle cells. Regulates the circadian clock by modulating its intrinsic circadian rhythm and its capacity to respond to external cues. Associates with clock proteins and deubiquitinates core clock component PER1 but does not affect its overall stability. Regulates the nucleocytoplasmic shuttling and nuclear retention of PER1 and its repressive role on the clock transcription factors CLOCK and BMAL1. The polypeptide is Ubiquitin carboxyl-terminal hydrolase 2 (USP2) (Bos taurus (Bovine)).